The sequence spans 240 residues: Biosynthetic peptidoglycan transglycosylase (240 aa).

A helical transmembrane segment spans residues 12-31 (ALLWFAGGSVLLVLVFRFVP).

The protein belongs to the glycosyltransferase 51 family.

Its subcellular location is the cell inner membrane. It carries out the reaction [GlcNAc-(1-&gt;4)-Mur2Ac(oyl-L-Ala-gamma-D-Glu-L-Lys-D-Ala-D-Ala)](n)-di-trans,octa-cis-undecaprenyl diphosphate + beta-D-GlcNAc-(1-&gt;4)-Mur2Ac(oyl-L-Ala-gamma-D-Glu-L-Lys-D-Ala-D-Ala)-di-trans,octa-cis-undecaprenyl diphosphate = [GlcNAc-(1-&gt;4)-Mur2Ac(oyl-L-Ala-gamma-D-Glu-L-Lys-D-Ala-D-Ala)](n+1)-di-trans,octa-cis-undecaprenyl diphosphate + di-trans,octa-cis-undecaprenyl diphosphate + H(+). It functions in the pathway cell wall biogenesis; peptidoglycan biosynthesis. Its function is as follows. Peptidoglycan polymerase that catalyzes glycan chain elongation from lipid-linked precursors. This is Biosynthetic peptidoglycan transglycosylase from Pseudomonas fluorescens (strain Pf0-1).